A 210-amino-acid polypeptide reads, in one-letter code: MATVKVYDQNKQESGEVTLASDVFEIEVRPEILNLVARAQMAAKRAGTHNVKTRAFVSGGGAKPWKQKGTGRARAGSNRSPIWRGGAITFGPSPRDYTFKVNSKVRSLALKMALSSRLAAESLMVVKGIVLPEAKTKHFAKVADTLGLTKALIVAPEENADLTRSARNIPGLTLTTVDRLSVLEILKHKQLVLLEGAVESVQARFEKKGA.

Positions 57–78 (VSGGGAKPWKQKGTGRARAGSN) are disordered.

It belongs to the universal ribosomal protein uL4 family. Part of the 50S ribosomal subunit.

Its function is as follows. One of the primary rRNA binding proteins, this protein initially binds near the 5'-end of the 23S rRNA. It is important during the early stages of 50S assembly. It makes multiple contacts with different domains of the 23S rRNA in the assembled 50S subunit and ribosome. Forms part of the polypeptide exit tunnel. This chain is Large ribosomal subunit protein uL4, found in Desulfovibrio desulfuricans (strain ATCC 27774 / DSM 6949 / MB).